A 239-amino-acid polypeptide reads, in one-letter code: Ribosomal RNA small subunit methyltransferase G (239 aa).

S-adenosyl-L-methionine is bound by residues Gly-77, Phe-82, 128-129 (AE), and Arg-146. The tract at residues 215–239 (DKKRQTPKKYPRKPGTPNKTPLLEK) is disordered.

It belongs to the methyltransferase superfamily. RNA methyltransferase RsmG family.

It is found in the cytoplasm. Its function is as follows. Specifically methylates the N7 position of guanine in position 535 of 16S rRNA. This Staphylococcus aureus (strain USA300) protein is Ribosomal RNA small subunit methyltransferase G.